We begin with the raw amino-acid sequence, 445 residues long: Mannan endo-1,4-beta-mannosidase 2 (445 aa).

The N-terminal stretch at 1–27 (MAVGNGLILYHILGLASCIALVYFSLG) is a signal peptide. W110 provides a ligand contact to substrate. A glycan (N-linked (GlcNAc...) asparagine) is linked at N181. N226 is a substrate binding site. The active-site Proton donor is the E227. Y309 is a substrate binding site. E349 acts as the Nucleophile in catalysis. W391 contacts substrate.

It belongs to the glycosyl hydrolase 5 (cellulase A) family. As to expression, expressed in stems and seeds, and at lower levels in roots and leaves.

The protein resides in the secreted. It carries out the reaction Random hydrolysis of (1-&gt;4)-beta-D-mannosidic linkages in mannans, galactomannans and glucomannans.. The sequence is that of Mannan endo-1,4-beta-mannosidase 2 (MAN2) from Oryza sativa subsp. japonica (Rice).